Reading from the N-terminus, the 295-residue chain is Cop9 signalosome-interactor 1 (295 aa).

Component of a COP9 signalosome-like (CSN) complex, composed of RRI1/CSN5, CSN9, RRI2/CSN10, PCI8/CSN11, CSN12 and CSI1. In the complex, it probably interacts directly with CSN9 and CSN12. Interacts also with RPN5.

It localises to the cytoplasm. It is found in the nucleus. Its function is as follows. Component of the COP9 signalosome (CSN) complex that acts as an regulator of the ubiquitin (Ubl) conjugation pathway by mediating the deneddylation of the cullin subunit of SCF-type E3 ubiquitin-protein ligase complexes The CSN complex is involved in the regulation of the mating pheromone response. This chain is Cop9 signalosome-interactor 1 (CSI1), found in Saccharomyces cerevisiae (strain ATCC 204508 / S288c) (Baker's yeast).